Reading from the N-terminus, the 831-residue chain is Periplasmic nitrate reductase (831 aa).

A signal peptide (tat-type signal) is located at residues 1–29 (MKVSRRDFIKQTAIAATASVAGIPLGTEA). Residues 41-97 (LKWSKAPCRFCGTGCGVTVAVRDNKVVATQGDPQCEVNKGLNCVKGYFLSKIMYGQD) enclose the 4Fe-4S Mo/W bis-MGD-type domain. Cys-48, Cys-51, Cys-55, and Cys-83 together coordinate [4Fe-4S] cluster. Residues Lys-85, Gln-152, Asn-177, Cys-181, 214–221 (WGSNMAEM), 245–249 (STFTH), 264–266 (QTD), Met-375, Gln-379, Asn-485, 511–512 (SD), Lys-534, Asp-561, and 721–730 (TGRVLEHWHS) contribute to the Mo-bis(molybdopterin guanine dinucleotide) site. Trp-797 lines the substrate pocket. Mo-bis(molybdopterin guanine dinucleotide)-binding residues include Asn-805 and Lys-822.

This sequence belongs to the prokaryotic molybdopterin-containing oxidoreductase family. NasA/NapA/NarB subfamily. In terms of assembly, component of the periplasmic nitrate reductase NapAB complex composed of NapA and NapB. The cofactor is [4Fe-4S] cluster. Mo-bis(molybdopterin guanine dinucleotide) is required as a cofactor. Post-translationally, predicted to be exported by the Tat system. The position of the signal peptide cleavage has not been experimentally proven.

It is found in the periplasm. It carries out the reaction 2 Fe(II)-[cytochrome] + nitrate + 2 H(+) = 2 Fe(III)-[cytochrome] + nitrite + H2O. Catalytic subunit of the periplasmic nitrate reductase complex NapAB. Receives electrons from NapB and catalyzes the reduction of nitrate to nitrite. The protein is Periplasmic nitrate reductase of Cupriavidus pinatubonensis (strain JMP 134 / LMG 1197) (Cupriavidus necator (strain JMP 134)).